Consider the following 204-residue polypeptide: Large ribosomal subunit protein eL15 (204 aa).

The protein belongs to the eukaryotic ribosomal protein eL15 family. Component of the large ribosomal subunit.

Its subcellular location is the cytoplasm. In terms of biological role, component of the large ribosomal subunit. The ribosome is a large ribonucleoprotein complex responsible for the synthesis of proteins in the cell. The sequence is that of Large ribosomal subunit protein eL15 (rpl15) from Cyprinus carpio (Common carp).